Here is a 143-residue protein sequence, read N- to C-terminus: MSTVPSVQTFGKKKSATAVAHVKAGKGLIKVNGSPITLVQPEILRFKVYEPLLLVGLDKFANIDIRVKVTGGGHVSQVYAIRQAIAKGLVAYHQKFVDEQSKNELKKAFTSYDRTLLIADSRRPEPKKFGGRGARSRFQKSYR.

Positions 123 to 143 are disordered; sequence RPEPKKFGGRGARSRFQKSYR. The span at 134–143 shows a compositional bias: basic residues; it reads ARSRFQKSYR.

The protein belongs to the universal ribosomal protein uS9 family.

This chain is Small ribosomal subunit protein uS9 (RPS16), found in Kluyveromyces lactis (strain ATCC 8585 / CBS 2359 / DSM 70799 / NBRC 1267 / NRRL Y-1140 / WM37) (Yeast).